A 149-amino-acid chain; its full sequence is Transcriptional repressor NrdR (149 aa).

A zinc finger lies at 3–34 (CPFCFAVDTKVIDSRLVGEGSSVRRRRQCLVC). The region spanning 49–139 (PRVVKSNDVR…VYRSFEDIKE (91 aa)) is the ATP-cone domain.

The protein belongs to the NrdR family. It depends on Zn(2+) as a cofactor.

Its function is as follows. Negatively regulates transcription of bacterial ribonucleotide reductase nrd genes and operons by binding to NrdR-boxes. In Klebsiella pneumoniae (strain 342), this protein is Transcriptional repressor NrdR.